The following is a 1193-amino-acid chain: Laminin subunit gamma-2 (1193 aa).

The signal sequence occupies residues 1 to 21; the sequence is MPALWLGCCLCFSLLLPAARA. 12 disulfide bridges follow: C28–C37, C30–C53, C56–C65, C68–C81, C84–C96, C86–C102, C104–C113, C116–C128, C139–C150, C141–C155, C157–C166, and C169–C184. Laminin EGF-like domains are found at residues 28–83, 84–130, and 139–186; these read CDCN…RCLP, CNCN…GCTQ, and CDCD…GCTQ. Positions 187–196 constitute a Laminin EGF-like 4; first part domain; the sequence is CFCYGHSASC. One can recognise a Laminin IV type A domain in the interval 213–381; sequence QDVDGWKAVQ…SGAPAPWVEQ (169 aa). N342 and N362 each carry an N-linked (GlcNAc...) asparagine glycan. One can recognise a Laminin EGF-like 4; second part domain in the interval 382–415; sequence CICPVGYKGQFCQDCASGYKRDSARLGPFGTCIP. 3 consecutive Laminin EGF-like domains span residues 416-461, 462-516, and 517-572; these read CNCQ…SCKP, CPCH…PCQP, and CQCN…KCRA. 11 disulfides stabilise this stretch: C462–C470, C464–C481, C484–C493, C496–C514, C517–C531, C519–C538, C541–C550, C553–C570, C573–C585, C575–C591, and C593–C602. The 30-residue stretch at 573–602 folds into the Laminin EGF-like 8; truncated domain; it reads CNCNPMGSEPVGCRSDGTCVCKPGFGGPNC. The interval 603–1193 is domain II and I; it reads EHGAFSCPAC…CYNTQALEQQ (591 aa). Residues 611-718 are a coiled coil; it reads ACYNQVKIQM…GSQYQNRVRD (108 aa). 2 O-linked (Xyl...) (chondroitin sulfate) serine glycosylation sites follow: S803 and S805. 2 coiled-coil regions span residues 811–1076 and 1117–1193; these read AVVQ…AVQM and EEGL…LEQQ. 2 N-linked (GlcNAc...) asparagine glycosylation sites follow: N942 and N1033.

Laminin is a complex glycoprotein, consisting of three different polypeptide chains (alpha, beta, gamma), which are bound to each other by disulfide bonds into a cross-shaped molecule comprising one long and three short arms with globules at each end. Gamma-2 is a subunit of laminin-5 (laminin-332 or epiligrin/kalinin/nicein). In terms of processing, O-glycosylated; contains chondroitin sulfate (CS). CS attachment is on either Ser-803 or Ser-805. As to expression, the large variant is expressed only in specific epithelial cells of embryonic and neonatal tissues. In 17-week old embryo the small variant is found in cerebral cortex, lung, and distal tubes of kidney, but not in epithelia except for distal tubuli.

The protein localises to the secreted. The protein resides in the extracellular space. It localises to the extracellular matrix. It is found in the basement membrane. Binding to cells via a high affinity receptor, laminin is thought to mediate the attachment, migration and organization of cells into tissues during embryonic development by interacting with other extracellular matrix components. Ladsin exerts cell-scattering activity toward a wide variety of cells, including epithelial, endothelial, and fibroblastic cells. In Homo sapiens (Human), this protein is Laminin subunit gamma-2 (LAMC2).